The sequence spans 89 residues: Small ribosomal subunit protein uS19 (89 aa).

The protein belongs to the universal ribosomal protein uS19 family.

Functionally, protein S19 forms a complex with S13 that binds strongly to the 16S ribosomal RNA. The chain is Small ribosomal subunit protein uS19 from Porphyromonas gingivalis (strain ATCC 33277 / DSM 20709 / CIP 103683 / JCM 12257 / NCTC 11834 / 2561).